We begin with the raw amino-acid sequence, 221 residues long: Transcription factor bHLH148 (221 aa).

2 disordered regions span residues 1-45 and 70-89; these read MASL…GEIH and LNSS…GKAV. Low complexity-rich tracts occupy residues 26 to 41 and 72 to 82; these read SASS…SSVS and SSASTSSSPTA. Residues 148 to 197 enclose the bHLH domain; that stretch reads KRRVSVLRLNKKSIPDVNRKVRVLGRLVPGCGKQSVPVILEEATDYIQAL.

In terms of assembly, homodimer. Interacts with PRE3. Binds to RSA1.

The protein localises to the nucleus. Functionally, bHLH transcription factor that binds DNA on specific sequence 5'-CANNTG-3' in target gene promoters. Negatively regulates brassinosteroid signaling. Together with BHLH148/RITF1, regulates the transcription of several genes involved in the detoxification of reactive oxygen species (ROS) generated by salt (NaCl) stress. Confers tolerance to salt and to the oxidative stress-inducing reagents hydrogen peroxide H(2)O(2) and methyl viologen (MV). This Arabidopsis thaliana (Mouse-ear cress) protein is Transcription factor bHLH148.